The sequence spans 167 residues: ATP synthase subunit b (167 aa).

The helical transmembrane segment at 8-28 threads the bilayer; the sequence is AEAEFWVGAGLLIFLGIVFFG.

Belongs to the ATPase B chain family. In terms of assembly, F-type ATPases have 2 components, F(1) - the catalytic core - and F(0) - the membrane proton channel. F(1) has five subunits: alpha(3), beta(3), gamma(1), delta(1), epsilon(1). F(0) has three main subunits: a(1), b(2) and c(10-14). The alpha and beta chains form an alternating ring which encloses part of the gamma chain. F(1) is attached to F(0) by a central stalk formed by the gamma and epsilon chains, while a peripheral stalk is formed by the delta and b chains.

The protein localises to the cell inner membrane. F(1)F(0) ATP synthase produces ATP from ADP in the presence of a proton or sodium gradient. F-type ATPases consist of two structural domains, F(1) containing the extramembraneous catalytic core and F(0) containing the membrane proton channel, linked together by a central stalk and a peripheral stalk. During catalysis, ATP synthesis in the catalytic domain of F(1) is coupled via a rotary mechanism of the central stalk subunits to proton translocation. In terms of biological role, component of the F(0) channel, it forms part of the peripheral stalk, linking F(1) to F(0). The protein is ATP synthase subunit b of Phenylobacterium zucineum (strain HLK1).